The primary structure comprises 377 residues: Floricaula/leafy homolog (377 aa).

Over residues 116–126 the composition is skewed to basic and acidic residues; sequence RRRLDEEDPRR. The disordered stretch occupies residues 116-190; sequence RRRLDEEDPR…RKKGQRKVVD (75 aa). A compositionally biased stretch (polar residues) spans 131-141; sequence SGDNNTNTLDA. DNA-binding regions lie at residues 206–210, 275–282, and 346–349; these read REHPF, NKPKMRHY, and YVPT.

This sequence belongs to the FLO/LFY family. In developing inflorescences, leaf primordia and very young leaves.

The protein resides in the nucleus. Functionally, probable transcription factor. In Populus trichocarpa (Western balsam poplar), this protein is Floricaula/leafy homolog (FL).